The chain runs to 428 residues: Phosphomethylpyrimidine synthase 2 (428 aa).

Substrate contacts are provided by residues Asn-65, Met-94, Tyr-123, His-158, 180-182, 221-224, and Glu-260; these read SRG and DGMR. His-264 provides a ligand contact to Zn(2+). A substrate-binding site is contributed by Tyr-287. His-328 is a Zn(2+) binding site. Residues Cys-405, Cys-408, and Cys-412 each contribute to the [4Fe-4S] cluster site.

Belongs to the ThiC family. The cofactor is [4Fe-4S] cluster.

It catalyses the reaction 5-amino-1-(5-phospho-beta-D-ribosyl)imidazole + S-adenosyl-L-methionine = 4-amino-2-methyl-5-(phosphooxymethyl)pyrimidine + CO + 5'-deoxyadenosine + formate + L-methionine + 3 H(+). It participates in cofactor biosynthesis; thiamine diphosphate biosynthesis. Its function is as follows. Catalyzes the synthesis of the hydroxymethylpyrimidine phosphate (HMP-P) moiety of thiamine from aminoimidazole ribotide (AIR) in a radical S-adenosyl-L-methionine (SAM)-dependent reaction. This chain is Phosphomethylpyrimidine synthase 2, found in Methanosarcina barkeri (strain Fusaro / DSM 804).